The primary structure comprises 243 residues: Probable transcriptional regulatory protein BRE_29 (243 aa).

The protein belongs to the TACO1 family.

The protein resides in the cytoplasm. This is Probable transcriptional regulatory protein BRE_29 from Borrelia recurrentis (strain A1).